The chain runs to 250 residues: Glucosamine-6-phosphate deaminase (250 aa).

Asp-67 serves as the catalytic Proton acceptor; for enolization step. Asn-136 functions as the For ring-opening step in the catalytic mechanism. His-138 functions as the Proton acceptor; for ring-opening step in the catalytic mechanism. The For ring-opening step role is filled by Glu-143.

Belongs to the glucosamine/galactosamine-6-phosphate isomerase family. NagB subfamily.

It carries out the reaction alpha-D-glucosamine 6-phosphate + H2O = beta-D-fructose 6-phosphate + NH4(+). The protein operates within amino-sugar metabolism; N-acetylneuraminate degradation; D-fructose 6-phosphate from N-acetylneuraminate: step 5/5. Catalyzes the reversible isomerization-deamination of glucosamine 6-phosphate (GlcN6P) to form fructose 6-phosphate (Fru6P) and ammonium ion. The sequence is that of Glucosamine-6-phosphate deaminase from Oceanobacillus iheyensis (strain DSM 14371 / CIP 107618 / JCM 11309 / KCTC 3954 / HTE831).